Consider the following 235-residue polypeptide: UPF0702 transmembrane protein YdfS (235 aa).

A run of 2 helical transmembrane segments spans residues 32-52 (MTIF…GLAY) and 60-80 (NMAI…FLSI).

It belongs to the UPF0702 family.

The protein localises to the cell membrane. This Bacillus subtilis (strain 168) protein is UPF0702 transmembrane protein YdfS (ydfS).